Here is a 142-residue protein sequence, read N- to C-terminus: Universal stress protein C (142 aa).

Belongs to the universal stress protein A family.

The protein localises to the cytoplasm. Functionally, required for resistance to DNA-damaging agents. The chain is Universal stress protein C (uspC) from Escherichia coli O6:H1 (strain CFT073 / ATCC 700928 / UPEC).